Here is a 341-residue protein sequence, read N- to C-terminus: Methionine import ATP-binding protein MetN 1 (341 aa).

The 240-residue stretch at 2–241 (IEFRQVSKSF…PKTTIAQNFV (240 aa)) folds into the ABC transporter domain. 38-45 (GYSGAGKS) contributes to the ATP binding site.

The protein belongs to the ABC transporter superfamily. Methionine importer (TC 3.A.1.24) family. In terms of assembly, the complex is composed of two ATP-binding proteins (MetN), two transmembrane proteins (MetI) and a solute-binding protein (MetQ).

It localises to the cell membrane. It carries out the reaction L-methionine(out) + ATP + H2O = L-methionine(in) + ADP + phosphate + H(+). It catalyses the reaction D-methionine(out) + ATP + H2O = D-methionine(in) + ADP + phosphate + H(+). In terms of biological role, part of the ABC transporter complex MetNIQ involved in methionine import. Responsible for energy coupling to the transport system. This is Methionine import ATP-binding protein MetN 1 from Staphylococcus aureus (strain MRSA252).